Reading from the N-terminus, the 367-residue chain is tRNA-specific 2-thiouridylase MnmA (367 aa).

Residues 13–20 (GLSGGVDS) and Met39 contribute to the ATP site. The tract at residues 99–101 (NPD) is interaction with target base in tRNA. The active-site Nucleophile is the Cys104. A disulfide bridge connects residues Cys104 and Cys200. Gly128 contributes to the ATP binding site. Residues 150-152 (KDQ) form an interaction with tRNA region. Cys200 functions as the Cysteine persulfide intermediate in the catalytic mechanism. Residues 307-308 (RY) are interaction with tRNA.

Belongs to the MnmA/TRMU family.

Its subcellular location is the cytoplasm. It carries out the reaction S-sulfanyl-L-cysteinyl-[protein] + uridine(34) in tRNA + AH2 + ATP = 2-thiouridine(34) in tRNA + L-cysteinyl-[protein] + A + AMP + diphosphate + H(+). Functionally, catalyzes the 2-thiolation of uridine at the wobble position (U34) of tRNA, leading to the formation of s(2)U34. The polypeptide is tRNA-specific 2-thiouridylase MnmA (Neisseria meningitidis serogroup B (strain ATCC BAA-335 / MC58)).